The primary structure comprises 366 residues: Histidinol-phosphate aminotransferase (366 aa).

At lysine 228 the chain carries N6-(pyridoxal phosphate)lysine.

The protein belongs to the class-II pyridoxal-phosphate-dependent aminotransferase family. Histidinol-phosphate aminotransferase subfamily. As to quaternary structure, homodimer. Pyridoxal 5'-phosphate serves as cofactor.

It catalyses the reaction L-histidinol phosphate + 2-oxoglutarate = 3-(imidazol-4-yl)-2-oxopropyl phosphate + L-glutamate. Its pathway is amino-acid biosynthesis; L-histidine biosynthesis; L-histidine from 5-phospho-alpha-D-ribose 1-diphosphate: step 7/9. The sequence is that of Histidinol-phosphate aminotransferase from Corynebacterium diphtheriae (strain ATCC 700971 / NCTC 13129 / Biotype gravis).